We begin with the raw amino-acid sequence, 450 residues long: Protein indeterminate-domain 13 (450 aa).

Ser54 carries the phosphoserine modification. 2 C2H2-type zinc fingers span residues Phe64–His86 and Tyr106–His136. The short motif at Ile128–Lys135 is the Nuclear localization signal element. The C2H2-type 2; degenerate zinc finger occupies Trp141–Ser165. The Zn(2+) site is built by Cys143, Cys146, His159, Cys163, Cys170, Cys172, His185, and Cys189. A CCHC-type 2; atypical zinc finger spans residues Phe168–Val191. The tract at residues Arg178 to Asp190 is SHR-binding. Polar residues predominate over residues Phe248–Asn263. Residues Phe248–Val280 are disordered.

The protein resides in the nucleus. Its function is as follows. Probable transcription factor. This is Protein indeterminate-domain 13 from Arabidopsis thaliana (Mouse-ear cress).